The sequence spans 289 residues: Porin (289 aa).

Homotrimer.

It localises to the cell outer membrane. Forms channels that allow the passive diffusion of small hydrophilic solutes up to an exclusion limit of about 0.6 kDa. In Fuscovulum blasticum (Rhodobacter blasticus), this protein is Porin (opmA).